The chain runs to 314 residues: Olfactory receptor 5P67 (314 aa).

At 1–28 (MAFLEDGNHTAVTEFILLGLTDDPVLRV) the chain is on the extracellular side. Asparagine 8 is a glycosylation site (N-linked (GlcNAc...) asparagine). Residues 29 to 49 (ILFTIILCIYLVTVSGNLSTI) traverse the membrane as a helical segment. Over 50–57 (LLIRVSSQ) the chain is Cytoplasmic. A helical transmembrane segment spans residues 58 to 78 (LHHPMYFFLSHVGSVDIGYSS). Topologically, residues 79–102 (SVTPNMLVNFLVEKHTIAYLGCGI) are extracellular. Cysteines 100 and 192 form a disulfide. A helical transmembrane segment spans residues 103 to 123 (QLSSAAFFGTAECFLLATMAY). At 124–136 (DRFVAICNPLLYS) the chain is on the cytoplasmic side. Residues 137 to 157 (TKMSTQTCIQLVVGSYTGGIL) form a helical membrane-spanning segment. Residues 158-199 (NASFAIISFFSFLFCGPNRINHFYCDFAPLVELSCSDINVSV) are Extracellular-facing. The helical transmembrane segment at 200 to 220 (VITTIFSASVTIITVFVIAIS) threads the bilayer. The Cytoplasmic segment spans residues 221-240 (YTYILITILKMRSTEGRHKA). A helical membrane pass occupies residues 241–261 (FSTCTSYLTAVTLFYGTVTFI). Topologically, residues 262 to 274 (YVVPKSNYSTDQN) are extracellular. The N-linked (GlcNAc...) asparagine glycan is linked to asparagine 268. The helical transmembrane segment at 275–295 (KVASVFYIVVIPMLNPLIYSL) threads the bilayer. The Cytoplasmic segment spans residues 296 to 314 (RNNDIKGALKRQLGKKTFS).

Belongs to the G-protein coupled receptor 1 family.

It is found in the cell membrane. Potential odorant receptor. The polypeptide is Olfactory receptor 5P67 (Mus musculus (Mouse)).